We begin with the raw amino-acid sequence, 402 residues long: MANPKVVLAYSGGLDTSVAIKWLQEQGYDVVACCLDVGEGKDLEFVKEKALKVGAVKSYMIDAKEEFANEYALIALQAHALYEGKYPLISALSRPLISKKLVEIAELEGAVAVAHGCTGKGNDQVRFEVSIQALNPNLKVIAPVREWKWSREEEIEYAKQHDIPIPIDLDSPFSIDQNLWGRSNECGILEDPWAAPPEEAYELTVALEHTPNEPDIIEIGFEQGIPKTINGKAYSLAELILQLNALAGKHGVGRIDHVENRLVGIKSREVYECPGAMTLIKAHKELEDLTLVKEVAHFKPIIEQKIAEVIYNGLWFSPLKDALVAFLKETQKNVTGVVRVKLFKGHAIVEGRKSPFSLYDEKLATYTAEDEFDHQAAVGFISLFGLPTKVYSIVNGEKKVSV.

Position 9–17 (9–17 (AYSGGLDTS)) interacts with ATP. Y86 lines the L-citrulline pocket. Residue G116 coordinates ATP. The L-aspartate site is built by T118, N122, and D123. N122 is a binding site for L-citrulline. L-citrulline is bound by residues R126, S174, S183, E259, and Y271.

It belongs to the argininosuccinate synthase family. Type 1 subfamily. In terms of assembly, homotetramer.

It is found in the cytoplasm. The catalysed reaction is L-citrulline + L-aspartate + ATP = 2-(N(omega)-L-arginino)succinate + AMP + diphosphate + H(+). Its pathway is amino-acid biosynthesis; L-arginine biosynthesis; L-arginine from L-ornithine and carbamoyl phosphate: step 2/3. This chain is Argininosuccinate synthase, found in Anoxybacillus flavithermus (strain DSM 21510 / WK1).